The following is a 214-amino-acid chain: Small ribosomal subunit protein eS6 (214 aa).

Belongs to the eukaryotic ribosomal protein eS6 family.

This Saccharolobus solfataricus (strain ATCC 35092 / DSM 1617 / JCM 11322 / P2) (Sulfolobus solfataricus) protein is Small ribosomal subunit protein eS6.